The following is a 318-amino-acid chain: Protoheme IX farnesyltransferase (318 aa).

A run of 9 helical transmembrane segments spans residues 37–57, 58–78, 100–120, 122–142, 155–175, 182–202, 228–248, 251–271, and 291–311; these read LVIFTALVGIAVAPGGIHPVI, AFTALLCIAVGAGASGALNMW, VTAREAAVFGSILSVFAVMTM, VLVNWVAAALLAFTIFFYLVV, IVIGGAAGAFPPMIGWAAVTG, FVLFLIIFMWTPPHFWALALY, IMLYSLALVPVTLLPGFLGFA, LYMGATAALGAGFLWLAFGIW, and ILYLFLIFSLLLVEKMLGLGG.

The protein belongs to the UbiA prenyltransferase family. Protoheme IX farnesyltransferase subfamily.

It localises to the cell inner membrane. It catalyses the reaction heme b + (2E,6E)-farnesyl diphosphate + H2O = Fe(II)-heme o + diphosphate. The protein operates within porphyrin-containing compound metabolism; heme O biosynthesis; heme O from protoheme: step 1/1. In terms of biological role, converts heme B (protoheme IX) to heme O by substitution of the vinyl group on carbon 2 of heme B porphyrin ring with a hydroxyethyl farnesyl side group. This chain is Protoheme IX farnesyltransferase, found in Parvibaculum lavamentivorans (strain DS-1 / DSM 13023 / NCIMB 13966).